The following is a 201-amino-acid chain: Lipoprotein signal peptidase (201 aa).

The next 2 helical transmembrane spans lie at 73-93 and 97-117; these read SNAIFLITNTIIVCYLYYLMI and TIGSFAGYSFVIGGAVGNLID. Catalysis depends on residues Asp126 and Asp144. Residues 135–155 traverse the membrane as a helical segment; the sequence is YSFPVFNLADCFIIIGVIILI.

The protein belongs to the peptidase A8 family.

It localises to the cell inner membrane. It catalyses the reaction Release of signal peptides from bacterial membrane prolipoproteins. Hydrolyzes -Xaa-Yaa-Zaa-|-(S,diacylglyceryl)Cys-, in which Xaa is hydrophobic (preferably Leu), and Yaa (Ala or Ser) and Zaa (Gly or Ala) have small, neutral side chains.. Its pathway is protein modification; lipoprotein biosynthesis (signal peptide cleavage). Functionally, this protein specifically catalyzes the removal of signal peptides from prolipoproteins. This chain is Lipoprotein signal peptidase, found in Rickettsia conorii (strain ATCC VR-613 / Malish 7).